The primary structure comprises 117 residues: Fluoride-specific ion channel FluC 2 (117 aa).

Helical transmembrane passes span 1-21 (MISI…RSAI) and 46-66 (FLIG…AFFV). Positions 71 and 74 each coordinate Na(+). A helical membrane pass occupies residues 95–115 (LFLNYSLLQFIIGFIACYIGY).

This sequence belongs to the fluoride channel Fluc/FEX (TC 1.A.43) family.

It is found in the cell membrane. It catalyses the reaction fluoride(in) = fluoride(out). Na(+) is not transported, but it plays an essential structural role and its presence is essential for fluoride channel function. Functionally, fluoride-specific ion channel. Important for reducing fluoride concentration in the cell, thus reducing its toxicity. The protein is Fluoride-specific ion channel FluC 2 of Staphylococcus aureus (strain NCTC 8325 / PS 47).